The primary structure comprises 155 residues: F-box only protein 48 (155 aa).

The interval 1 to 27 is disordered; sequence MHKNSKRNNNLRVSHTEANSVDAEKEK. Residues 7–19 are compositionally biased toward polar residues; sequence RNNNLRVSHTEAN. An F-box domain is found at 32-79; it reads NNFFELLPAEITFKIFSQLDIRSLCRASLTCRSWNDTIRNSDSLWKPH.

The chain is F-box only protein 48 (FBXO48) from Homo sapiens (Human).